We begin with the raw amino-acid sequence, 576 residues long: Proline--tRNA ligase (576 aa).

This sequence belongs to the class-II aminoacyl-tRNA synthetase family. ProS type 1 subfamily. As to quaternary structure, homodimer.

It localises to the cytoplasm. It catalyses the reaction tRNA(Pro) + L-proline + ATP = L-prolyl-tRNA(Pro) + AMP + diphosphate. Functionally, catalyzes the attachment of proline to tRNA(Pro) in a two-step reaction: proline is first activated by ATP to form Pro-AMP and then transferred to the acceptor end of tRNA(Pro). As ProRS can inadvertently accommodate and process non-cognate amino acids such as alanine and cysteine, to avoid such errors it has two additional distinct editing activities against alanine. One activity is designated as 'pretransfer' editing and involves the tRNA(Pro)-independent hydrolysis of activated Ala-AMP. The other activity is designated 'posttransfer' editing and involves deacylation of mischarged Ala-tRNA(Pro). The misacylated Cys-tRNA(Pro) is not edited by ProRS. In Trichlorobacter lovleyi (strain ATCC BAA-1151 / DSM 17278 / SZ) (Geobacter lovleyi), this protein is Proline--tRNA ligase.